The following is a 318-amino-acid chain: Thymidylate synthase (318 aa).

DUMP is bound by residues Arg-26 and 181 to 182 (RR). Cys-201 acts as the Nucleophile in catalysis. DUMP is bound by residues 221–224 (RSAD), Asn-232, and 262–264 (HIY). A (6R)-5,10-methylene-5,6,7,8-tetrahydrofolate-binding site is contributed by Asp-224. A (6R)-5,10-methylene-5,6,7,8-tetrahydrofolate-binding site is contributed by Ala-317.

The protein belongs to the thymidylate synthase family. Bacterial-type ThyA subfamily. As to quaternary structure, homodimer.

It localises to the cytoplasm. It carries out the reaction dUMP + (6R)-5,10-methylene-5,6,7,8-tetrahydrofolate = 7,8-dihydrofolate + dTMP. It functions in the pathway pyrimidine metabolism; dTTP biosynthesis. Catalyzes the reductive methylation of 2'-deoxyuridine-5'-monophosphate (dUMP) to 2'-deoxythymidine-5'-monophosphate (dTMP) while utilizing 5,10-methylenetetrahydrofolate (mTHF) as the methyl donor and reductant in the reaction, yielding dihydrofolate (DHF) as a by-product. This enzymatic reaction provides an intracellular de novo source of dTMP, an essential precursor for DNA biosynthesis. This chain is Thymidylate synthase, found in Staphylococcus haemolyticus (strain JCSC1435).